We begin with the raw amino-acid sequence, 339 residues long: Ketol-acid reductoisomerase (NADP(+)) (339 aa).

The region spanning 1–182 (MRVYYDRDAD…GGGRSGIIET (182 aa)) is the KARI N-terminal Rossmann domain. NADP(+) is bound by residues 24-27 (YGSQ), K48, S51, T53, and 83-86 (DELQ). Residue H108 is part of the active site. G134 is a binding site for NADP(+). Residues 183 to 328 (NFREECETDL…AKLRGMMPWI (146 aa)) enclose the KARI C-terminal knotted domain. Positions 191, 195, 227, and 231 each coordinate Mg(2+). S252 lines the substrate pocket.

It belongs to the ketol-acid reductoisomerase family. Requires Mg(2+) as cofactor.

It catalyses the reaction (2R)-2,3-dihydroxy-3-methylbutanoate + NADP(+) = (2S)-2-acetolactate + NADPH + H(+). The enzyme catalyses (2R,3R)-2,3-dihydroxy-3-methylpentanoate + NADP(+) = (S)-2-ethyl-2-hydroxy-3-oxobutanoate + NADPH + H(+). The protein operates within amino-acid biosynthesis; L-isoleucine biosynthesis; L-isoleucine from 2-oxobutanoate: step 2/4. It participates in amino-acid biosynthesis; L-valine biosynthesis; L-valine from pyruvate: step 2/4. Its function is as follows. Involved in the biosynthesis of branched-chain amino acids (BCAA). Catalyzes an alkyl-migration followed by a ketol-acid reduction of (S)-2-acetolactate (S2AL) to yield (R)-2,3-dihydroxy-isovalerate. In the isomerase reaction, S2AL is rearranged via a Mg-dependent methyl migration to produce 3-hydroxy-3-methyl-2-ketobutyrate (HMKB). In the reductase reaction, this 2-ketoacid undergoes a metal-dependent reduction by NADPH to yield (R)-2,3-dihydroxy-isovalerate. The polypeptide is Ketol-acid reductoisomerase (NADP(+)) (Rhizobium etli (strain ATCC 51251 / DSM 11541 / JCM 21823 / NBRC 15573 / CFN 42)).